We begin with the raw amino-acid sequence, 722 residues long: Probable cation-transporting ATPase HI_0290 (722 aa).

The HMA domain occupies 9-75; it reads KKISIQIGGM…IIHKTGFSAH (67 aa). 2 residues coordinate a metal cation: cysteine 20 and cysteine 23. 6 helical membrane-spanning segments follow: residues 94–114, 118–138, 157–177, 180–200, 340–360, and 373–393; these read LIVL…MIGG, LMLP…WLAI, VLVS…LFYH, HAMG…VSLG, VFVP…YILT, and VLVI…IMVG. The 4-aspartylphosphate intermediate role is filled by aspartate 422. Helical transmembrane passes span 523-543, 608-628, 675-695, and 697-717; these read IWQI…GAFA, LGHI…LASA, LFFA…GFLS, and IIAG…ALRL. Mg(2+) contacts are provided by aspartate 617 and aspartate 621.

It belongs to the cation transport ATPase (P-type) (TC 3.A.3) family. Type IB subfamily.

Its subcellular location is the cell membrane. It carries out the reaction ATP + H2O = ADP + phosphate + H(+). This chain is Probable cation-transporting ATPase HI_0290, found in Haemophilus influenzae (strain ATCC 51907 / DSM 11121 / KW20 / Rd).